A 260-amino-acid chain; its full sequence is Dynein regulatory complex subunit 6 (260 aa).

Basic residues predominate over residues 1–13 (MAPKKKGGGKKKK). The tract at residues 1–43 (MAPKKKGGGKKKKKDDGAEPPHDGSWERAVESGTWEKPVTDLP) is disordered. Basic and acidic residues predominate over residues 14-30 (KDDGAEPPHDGSWERAV).

This sequence belongs to the DRC6 family. Component of the nexin-dynein regulatory complex (N-DRC).

It localises to the cytoplasm. Its subcellular location is the cytoskeleton. The protein localises to the flagellum axoneme. Its function is as follows. Component of the nexin-dynein regulatory complex (N-DRC), a key regulator of ciliary/flagellar motility which maintains the alignment and integrity of the distal axoneme and regulates microtubule sliding in motile axonemes. In Chlamydomonas reinhardtii (Chlamydomonas smithii), this protein is Dynein regulatory complex subunit 6.